Consider the following 347-residue polypeptide: N-acetyl-gamma-glutamyl-phosphate reductase (347 aa).

Cys-151 is a catalytic residue.

This sequence belongs to the NAGSA dehydrogenase family. Type 1 subfamily.

Its subcellular location is the cytoplasm. It carries out the reaction N-acetyl-L-glutamate 5-semialdehyde + phosphate + NADP(+) = N-acetyl-L-glutamyl 5-phosphate + NADPH + H(+). The protein operates within amino-acid biosynthesis; L-arginine biosynthesis; N(2)-acetyl-L-ornithine from L-glutamate: step 3/4. In terms of biological role, catalyzes the NADPH-dependent reduction of N-acetyl-5-glutamyl phosphate to yield N-acetyl-L-glutamate 5-semialdehyde. The polypeptide is N-acetyl-gamma-glutamyl-phosphate reductase (Corynebacterium aurimucosum (strain ATCC 700975 / DSM 44827 / CIP 107346 / CN-1) (Corynebacterium nigricans)).